The primary structure comprises 332 residues: UDP-N-acetylenolpyruvoylglucosamine reductase (332 aa).

Residues 15–184 (IDVSAACFLE…TYVSFRLSKR (170 aa)) enclose the FAD-binding PCMH-type domain. Arg-160 is a catalytic residue. Ser-232 (proton donor) is an active-site residue. Glu-328 is a catalytic residue.

The protein belongs to the MurB family. The cofactor is FAD.

It is found in the cytoplasm. The enzyme catalyses UDP-N-acetyl-alpha-D-muramate + NADP(+) = UDP-N-acetyl-3-O-(1-carboxyvinyl)-alpha-D-glucosamine + NADPH + H(+). It participates in cell wall biogenesis; peptidoglycan biosynthesis. In terms of biological role, cell wall formation. This is UDP-N-acetylenolpyruvoylglucosamine reductase from Bacteroides fragilis (strain ATCC 25285 / DSM 2151 / CCUG 4856 / JCM 11019 / LMG 10263 / NCTC 9343 / Onslow / VPI 2553 / EN-2).